A 213-amino-acid chain; its full sequence is Phosphoribosyl-dephospho-CoA transferase (213 aa).

Residues D135 and D137 contribute to the active site.

It belongs to the MdcG family.

It catalyses the reaction apo-[malonate decarboxylase ACP] + 2'-(5''-triphospho-alpha-D-ribosyl)-3'-dephospho-CoA = holo-[malonate decarboxylase ACP] + diphosphate. Transfers 2'-(5-triphosphoribosyl)-3'-dephosphocoenzyme-A to the apo-[acyl-carrier-protein] of the malonate decarboxylase to yield holo-[acyl-carrier-protein]. The chain is Phosphoribosyl-dephospho-CoA transferase from Xanthomonas axonopodis pv. citri (strain 306).